Consider the following 243-residue polypeptide: DNA repair protein RecO (243 aa).

It belongs to the RecO family.

Functionally, involved in DNA repair and RecF pathway recombination. This is DNA repair protein RecO from Hyphomonas neptunium (strain ATCC 15444).